Here is a 665-residue protein sequence, read N- to C-terminus: Envelope glycoprotein (665 aa).

A signal peptide spans Met-1–Thr-33. Residues Ala-34 to Pro-267 form a receptor-binding domain (RBD) region. Over Ala-34 to Leu-610 the chain is Extracellular. An N-linked (GlcNAc...) asparagine; by host glycan is attached at Asn-45. Cystine bridges form between Cys-79–Cys-129, Cys-105–Cys-118, Cys-106–Cys-114, Cys-152–Cys-172, and Cys-164–Cys-177. Residue Asp-117 participates in Zn(2+) binding. N-linked (GlcNAc...) asparagine; by host glycosylation is present at Asn-199. Cysteines 209 and 215 form a disulfide. Residues Ile-268–Gly-309 form a disordered region. Residues Ser-281–Pro-299 are compositionally biased toward low complexity. Asn-326 is a glycosylation site (N-linked (GlcNAc...) asparagine; by host). Disulfide bonds link Cys-336–Cys-339, Cys-336–Cys-563, Cys-366–Cys-420, Cys-385–Cys-397, Cys-427–Cys-440, and Cys-555–Cys-562. The CXXC signature appears at Cys-336–Cys-339. Residues Asn-358 and Asn-365 are each glycosylated (N-linked (GlcNAc...) asparagine; by host). 2 N-linked (GlcNAc...) asparagine; by host glycosylation sites follow: Asn-398 and Asn-434. The segment at Val-472–Ile-492 is fusion peptide. A coiled-coil region spans residues Met-500–Val-537. The tract at residues Leu-538–Leu-554 is immunosuppression. The CX6CC signature appears at Cys-555 to Cys-563. The helical transmembrane segment at Ile-611–Ile-631 threads the bilayer. The S-palmitoyl cysteine; by host moiety is linked to residue Cys-630. At Leu-632–Pro-665 the chain is on the cytoplasmic side. The YXXL motif; contains endocytosis signal signature appears at Tyr-655–Leu-658.

As to quaternary structure, the mature envelope protein (Env) consists of a trimer of SU-TM heterodimers attached by a labile interchain disulfide bond. The activated Env consists of SU monomers and TM trimers. Post-translationally, specific enzymatic cleavages in vivo yield mature proteins. Envelope glycoproteins are synthesized as an inactive precursor that is N-glycosylated and processed likely by host cell furin or by a furin-like protease in the Golgi to yield the mature SU and TM proteins. The cleavage site between SU and TM requires the minimal sequence [KR]-X-[KR]-R. The R-peptide is released from the C-terminus of the cytoplasmic tail of the TM protein upon particle formation as a result of proteolytic cleavage by the viral protease. Cleavage of this peptide is required for TM to become fusogenic. The CXXC motif is highly conserved across a broad range of retroviral envelope proteins. It is thought to participate in the formation of a labile disulfide bond possibly with the CX6CC motif present in the transmembrane protein. Isomerization of the intersubunit disulfide bond to an SU intrachain disulfide bond is thought to occur upon receptor recognition in order to allow membrane fusion. In terms of processing, the transmembrane protein is palmitoylated. Post-translationally, the R-peptide is palmitoylated.

It localises to the virion membrane. The protein localises to the host cell membrane. Its function is as follows. The surface protein (SU) attaches the virus to the host cell by binding to its receptor. Interaction with HECT ubiquitin ligases activates a thiol in a CXXC motif of the C-terminal domain, where the other Cys residue participates in the formation of the intersubunit disulfide. The activated thiol will attack the disulfide and cause its isomerization into a disulfide isomer within the motif. This leads to SU displacement and TM refolding, and is thought to activate its fusogenic potential by unmasking its fusion peptide. Fusion occurs at the host cell plasma membrane. In terms of biological role, the transmembrane protein (TM) acts as a class I viral fusion protein. Under the current model, the protein has at least 3 conformational states: pre-fusion native state, pre-hairpin intermediate state, and post-fusion hairpin state. During viral and target cell membrane fusion, the coiled coil regions (heptad repeats) assume a trimer-of-hairpins structure, positioning the fusion peptide in close proximity to the C-terminal region of the ectodomain. The formation of this structure appears to drive apposition and subsequent fusion of viral and target cell membranes. Membranes fusion leads to delivery of the nucleocapsid into the cytoplasm. This Mus musculus (Mouse) protein is Envelope glycoprotein (env).